Reading from the N-terminus, the 476-residue chain is Protein transport protein Sec61 subunit alpha-like 1 (476 aa).

Topologically, residues 2–33 are cytoplasmic; it reads AIKFLEVIKPFCAVLPEIQKPERKIQFREKVL. A helical membrane pass occupies residues 34–53; sequence WTAITLFIFLVCCQIPLFGI. Residues 54 to 76 are Lumenal-facing; the sequence is MSSDSADPFYWMRVILASNRGTL. Residues 77-96 form a helical membrane-spanning segment; it reads MELGISPIVTSGLIMQLLAG. The Cytoplasmic portion of the chain corresponds to 97 to 117; it reads AKIIEVGDTPKDRALFNGAQK. Residues 118–138 form a helical membrane-spanning segment; sequence LFGMIITIGQAIVYVMTGMYG. Topologically, residues 139–144 are lumenal; that stretch reads DPSEMG. Residues 145–165 form a helical membrane-spanning segment; it reads AGICLLIIIQLFVAGLIVLLL. Residues 166–172 lie on the Cytoplasmic side of the membrane; that stretch reads DELLQKG. The chain crosses the membrane as a helical span at residues 173–193; that stretch reads YGLGSGISLFIATNICETIVW. Residues 194–240 are Lumenal-facing; sequence KAFSPTTVNTGRGTEFEGAIIALFHLLATRTDKVRALREAFYRQNLP. Residues 241–261 traverse the membrane as a helical segment; the sequence is NLMNLIATVFVFAVVIYFQGF. The Cytoplasmic segment spans residues 262–288; sequence RVDLPIKSARYRGQYNTYPIKLFYTSN. The helical transmembrane segment at 289-309 threads the bilayer; the sequence is IPIILQSALVSNLYVISQMLS. Residues 310–354 lie on the Lumenal side of the membrane; the sequence is TRFSGNFLVNLLGTWSDTSSGGPARAYPVGGLCYYLSPPESFGSV. Residues 355–375 traverse the membrane as a helical segment; it reads LDDPVHAVIYIVFMLGSCAFF. The Cytoplasmic portion of the chain corresponds to 376–420; it reads SKTWIEVSGSSAKDVAKQLKEQQMVMRGHRETSMVHELNRYIPTA. The chain crosses the membrane as a helical span at residues 421–441; it reads AAFGGLCIGGLSVMADFLGAI. The Lumenal portion of the chain corresponds to 442–445; the sequence is GSGT. Residues 446–462 form a helical membrane-spanning segment; it reads GILLAVTIIYQYFEIFV. Over 463 to 476 the chain is Cytoplasmic; that stretch reads KEQSEVGSMGALLF.

It belongs to the SecY/SEC61-alpha family. The SEC61 channel-forming translocon complex consists of channel-forming core components SEC61A1, SEC61B and SEC61G and different auxiliary components such as SEC62 and SEC63. The SEC61 channel associates with the multi-pass translocon (MPT) complex.

It is found in the endoplasmic reticulum membrane. Component of SEC61 channel-forming translocon complex that mediates transport of signal peptide-containing precursor polypeptides across the endoplasmic reticulum (ER). Forms a ribosome receptor and a gated pore in the ER membrane, both functions required for cotranslational translocation of nascent polypeptides. May cooperate with auxiliary protein SEC62, SEC63 and HSPA5/BiP to enable post-translational transport of small presecretory proteins. The SEC61 channel is also involved in ER membrane insertion of transmembrane proteins: it mediates membrane insertion of the first few transmembrane segments of proteins, while insertion of subsequent transmembrane regions of multi-pass membrane proteins is mediated by the multi-pass translocon (MPT) complex. Plays a role in the pronephric kidney tubule development. The protein is Protein transport protein Sec61 subunit alpha-like 1 (sec61al1) of Danio rerio (Zebrafish).